The primary structure comprises 1380 residues: DNA-directed RNA polymerase subunit beta (1380 aa).

This sequence belongs to the RNA polymerase beta chain family. The RNAP catalytic core consists of 2 alpha, 1 beta, 1 beta' and 1 omega subunit. When a sigma factor is associated with the core the holoenzyme is formed, which can initiate transcription.

It carries out the reaction RNA(n) + a ribonucleoside 5'-triphosphate = RNA(n+1) + diphosphate. In terms of biological role, DNA-dependent RNA polymerase catalyzes the transcription of DNA into RNA using the four ribonucleoside triphosphates as substrates. This chain is DNA-directed RNA polymerase subunit beta, found in Alcanivorax borkumensis (strain ATCC 700651 / DSM 11573 / NCIMB 13689 / SK2).